Reading from the N-terminus, the 443-residue chain is Phosphoglucosamine mutase (443 aa).

The active-site Phosphoserine intermediate is S100. S100, D239, D241, and D243 together coordinate Mg(2+). A Phosphoserine modification is found at S100.

This sequence belongs to the phosphohexose mutase family. Mg(2+) serves as cofactor. Activated by phosphorylation.

The catalysed reaction is alpha-D-glucosamine 1-phosphate = D-glucosamine 6-phosphate. Its function is as follows. Catalyzes the conversion of glucosamine-6-phosphate to glucosamine-1-phosphate. The polypeptide is Phosphoglucosamine mutase (Shewanella loihica (strain ATCC BAA-1088 / PV-4)).